Here is a 343-residue protein sequence, read N- to C-terminus: L-threonine 3-dehydrogenase (343 aa).

Cys40 contacts Zn(2+). Residues Thr42 and His45 each act as charge relay system in the active site. Positions 65, 66, 95, 98, 101, and 109 each coordinate Zn(2+). NAD(+) is bound by residues Ile177, Asp197, Arg202, 264–266 (LGI), and 288–289 (IY).

It belongs to the zinc-containing alcohol dehydrogenase family. As to quaternary structure, homotetramer. Zn(2+) is required as a cofactor.

The protein localises to the cytoplasm. The catalysed reaction is L-threonine + NAD(+) = (2S)-2-amino-3-oxobutanoate + NADH + H(+). It participates in amino-acid degradation; L-threonine degradation via oxydo-reductase pathway; glycine from L-threonine: step 1/2. Its function is as follows. Catalyzes the NAD(+)-dependent oxidation of L-threonine to 2-amino-3-ketobutyrate. This is L-threonine 3-dehydrogenase from Aliivibrio fischeri (strain MJ11) (Vibrio fischeri).